A 175-amino-acid chain; its full sequence is Protein MAL2 (175 aa).

Residues Met1–Thr33 lie on the Cytoplasmic side of the membrane. The 145-residue stretch at Ile30–Arg174 folds into the MARVEL domain. The helical transmembrane segment at Tyr34 to Ala54 threads the bilayer. The Lumenal portion of the chain corresponds to Ser55–Gly65. A helical membrane pass occupies residues Trp66–Leu86. Residues Ser87–Asp101 lie on the Cytoplasmic side of the membrane. Residues Phe102–Ala122 form a helical membrane-spanning segment. The Lumenal segment spans residues Thr123 to Asn148. Asn131 is a glycosylation site (N-linked (GlcNAc...) asparagine). The helical transmembrane segment at Val149–Ala169 threads the bilayer. Residues Leu170–Pro175 are Cytoplasmic-facing.

The protein belongs to the MAL family. In terms of assembly, interacts with TPD52L2.

Its subcellular location is the cell membrane. The protein localises to the apical cell membrane. Its function is as follows. Member of the machinery of polarized transport. Required for the indirect transcytotic route at the step of the egress of the transcytosing cargo from perinuclear endosomes in order for it to travel to the apical surface via a raft-dependent pathway. In Mus musculus (Mouse), this protein is Protein MAL2 (Mal2).